Consider the following 219-residue polypeptide: UPF0173 metal-dependent hydrolase Mlab_1154 (219 aa).

The protein belongs to the UPF0173 family.

The chain is UPF0173 metal-dependent hydrolase Mlab_1154 from Methanocorpusculum labreanum (strain ATCC 43576 / DSM 4855 / Z).